A 393-amino-acid chain; its full sequence is Cytotoxic and regulatory T-cell molecule (393 aa).

The N-terminal stretch at 1–16 (MWWGALSLLFWVPVQA) is a signal peptide. In terms of domain architecture, Ig-like V-type spans 17–111 (AFLKMETVTV…SVKTKQVRVT (95 aa)). Topologically, residues 17–289 (AFLKMETVTV…HTGLARRKSG (273 aa)) are extracellular. 2 cysteine pairs are disulfide-bonded: Cys36–Cys96 and Cys139–Cys194. N-linked (GlcNAc...) asparagine glycosylation is found at Asn85 and Asn176. The Ig-like C2-type domain maps to 119–208 (PTVEALVLRR…EGLHGRKLVA (90 aa)). Residues 218–228 (DQETSDQETSD) show a composition bias toward acidic residues. The segment at 218–280 (DQETSDQETS…GLSTEASAQH (63 aa)) is disordered. A compositionally biased stretch (low complexity) spans 229-246 (APEQSSLSSQALQQPTST). Positions 247-256 (VSMMENSSIP) are enriched in polar residues. Over residues 257–267 (ETDKEEKEHAT) the composition is skewed to basic and acidic residues. Positions 270 to 280 (PGLSTEASAQH) are enriched in polar residues. The helical transmembrane segment at 290–310 (ILLLTLVSFLIFILFIIVQLF) threads the bilayer. At 311-393 (IMKLRKAHVV…KHSRVPESIV (83 aa)) the chain is on the cytoplasmic side. The segment at 333–356 (ESYRSRSNNEETSSQENSSQAPQS) is disordered. Positions 342–352 (EETSSQENSSQ) are enriched in low complexity. Residues 390–393 (ESIV) carry the PDZ-binding motif.

Belongs to the nectin family. As to quaternary structure, monomer. May form homodimer (via Ig-like V-type domain). Interacts (via Ig-like V-type domain) with CADM1 (via Ig-like V-type domain); the interaction competes with CRTAM homodimerization and CADM1 homodimerization. Interacts (via PDZ-binding motif) with SCRIB (via PDZ domain 3); the interaction promotes CRTAM and SCRIB polarization in a subset of CD4+ T-cells. As to expression, in the immune system, expression is restricted to activated class-I MHC-restricted cells, including NKT, NK and CD8+ T-cells (at protein level). Transiently expressed in activated CD8+ T-cells and a subset of activated CD4+ T-cells (at protein level). Expressed in activated intestinal T-cells, specifically intraepithelial CD4+ CD8+ T-cells, intraepithelial CD4+ T-cells and, CD8+ T-cells in the intestine epithelium, lamina propria, Peyer's Patches and mesenteric lymph nodes. Also expressed in spleen, brain and testis.

It localises to the cell membrane. In terms of biological role, mediates heterophilic cell-cell adhesion which regulates the activation, differentiation and tissue retention of various T-cell subsets. Interaction with CADM1 promotes natural killer (NK) cell cytotoxicity and IFNG/interferon-gamma secretion by CD8+ T-cells in vitro as well as NK cell-mediated rejection of tumors expressing CADM1 in vivo. Regulates CD8+ T-cell proliferation in response to T-cell receptor (TCR) activation. Appears to be dispensable for CD8+ T-cell-mediated cytotoxicity. Interaction with SCRIB promotes the late phase of cellular polarization of a subset of CD4+ T-cells, which in turn regulates TCR-mediated proliferation and IFNG, IL17 and IL22 production. By interacting with CADM1 on CD8+ dendritic cells, regulates the retention of activated CD8+ T-cells within the draining lymph node. Required for the intestinal retention of intraepithelial CD4+ CD8+ T-cells and, to a lesser extent, intraepithelial and lamina propria CD8+ T-cells and CD4+ T-cells. Interaction with CADM1 promotes the adhesion to gut-associated CD103+ dendritic cells, which may facilitate the expression of gut-homing and adhesion molecules on T-cells and the conversion of CD4+ T-cells into CD4+ CD8+ T-cells. The polypeptide is Cytotoxic and regulatory T-cell molecule (Mus musculus (Mouse)).